The primary structure comprises 128 residues: Centrosomal protein 15 (128 aa).

It localises to the cell projection. It is found in the cilium. May play a role in ciliary assembly. This chain is Centrosomal protein 15, found in Homo sapiens (Human).